Consider the following 122-residue polypeptide: Large ribosomal subunit protein uL14 (122 aa).

The protein belongs to the universal ribosomal protein uL14 family. Part of the 50S ribosomal subunit. Forms a cluster with proteins L3 and L19. In the 70S ribosome, L14 and L19 interact and together make contacts with the 16S rRNA in bridges B5 and B8. Can interact with ribosomal silencing factor RsfS, which may inhibit ribosomal subunit association.

Functionally, binds to 23S rRNA. Forms part of two intersubunit bridges in the 70S ribosome. This is Large ribosomal subunit protein uL14 from Synechocystis sp. (strain ATCC 27184 / PCC 6803 / Kazusa).